We begin with the raw amino-acid sequence, 81 residues long: uncharacterized protein (81 aa).

The N-terminal stretch at 1–31 is a signal peptide; sequence MRYNSFLSVLALFNVLLWFTFILAISMTFSA. Residues 52–74 traverse the membrane as a helical segment; the sequence is WFFVLLPYVIGLFFAIFDSATIG.

The protein localises to the membrane. This is an uncharacterized protein from Pasteurella multocida (strain Pm70).